The following is a 142-amino-acid chain: Large ribosomal subunit protein uL13 (142 aa).

The protein belongs to the universal ribosomal protein uL13 family. As to quaternary structure, part of the 50S ribosomal subunit.

This protein is one of the early assembly proteins of the 50S ribosomal subunit, although it is not seen to bind rRNA by itself. It is important during the early stages of 50S assembly. This is Large ribosomal subunit protein uL13 from Pyrococcus horikoshii (strain ATCC 700860 / DSM 12428 / JCM 9974 / NBRC 100139 / OT-3).